A 535-amino-acid polypeptide reads, in one-letter code: T-complex protein 1 subunit beta (535 aa).

An N-acetylalanine modification is found at Ala2. Position 3 is a phosphoserine (Ser3). Lys13 is modified (N6-acetyllysine). Gly44 contacts ADP. Residue Gly44 participates in ATP binding. Residue Asp97 participates in Mg(2+) binding. The ADP site is built by Gly98, Thr99, Thr100, Ser101, Ser168, and Ser169. Positions 98, 99, and 100 each coordinate ATP. Lys181 is modified (N6-acetyllysine). A Glycyl lysine isopeptide (Lys-Gly) (interchain with G-Cter in SUMO2) cross-link involves residue Lys248. The residue at position 260 (Ser260) is a Phosphoserine. Thr261 is subject to Phosphothreonine. Residues Gly410, Glu495, and Lys500 each coordinate ADP. ATP-binding residues include Glu495 and Lys500.

This sequence belongs to the TCP-1 chaperonin family. In terms of assembly, component of the chaperonin-containing T-complex (TRiC), a hexadecamer composed of two identical back-to-back stacked rings enclosing a protein folding chamber. Each ring is made up of eight different subunits: TCP1/CCT1, CCT2, CCT3, CCT4, CCT5, CCT6A/CCT6, CCT7, CCT8. Interacts with PACRG. Interacts with FLCN. Interacts with DLEC1. Interacts with SVEP1. Post-translationally, the N-terminus is blocked.

Its subcellular location is the cytoplasm. The catalysed reaction is ATP + H2O = ADP + phosphate + H(+). In terms of biological role, component of the chaperonin-containing T-complex (TRiC), a molecular chaperone complex that assists the folding of actin, tubulin and other proteins upon ATP hydrolysis. The TRiC complex mediates the folding of WRAP53/TCAB1, thereby regulating telomere maintenance. As part of the TRiC complex may play a role in the assembly of BBSome, a complex involved in ciliogenesis regulating transports vesicles to the cilia. In Mus musculus (Mouse), this protein is T-complex protein 1 subunit beta (Cct2).